A 160-amino-acid polypeptide reads, in one-letter code: Glucagon-1 (160 aa).

A signal peptide spans 1 to 22 (MSDPGFLAAPVLLLLLVSLASA). 3 consecutive propeptides follow at residues 23-40 (SLEQ…RPLS), 74-79 (GGSELQ), and 116-127 (DGGDHLAENSED). A disordered region spans residues 112-132 (KSRRDGGDHLAENSEDKRHAE).

Belongs to the glucagon family.

It localises to the secreted. Its function is as follows. Promotes hydrolysis of glycogen and lipids, and raises the blood sugar level. The sequence is that of Glucagon-1 (gcg1) from Petromyzon marinus (Sea lamprey).